The following is a 226-amino-acid chain: METPSIDIQNIRAKYLNSHDPYLLESKLPTTSPFELFDIWFRNVASQSDLTFEEINAVSLSTVGKDLRPSSRMVLLKAYTPTGFSFYTNYTSRKGNQLEENPNAAMLFYWPKVNRQIRVEGVVEKLPDEMAVAYWNSRPVASRIGSKSSDQSKVVPDREFLESKKVALTELSVREGAQAITKPESWGGYHLIPRYFEFWQGQSDRLHDRIVFERDVDVWLLKRLSP.

Residue 16–19 participates in pyridoxal 5'-phosphate binding; that stretch reads LNSH. 72–75 contacts FMN; that stretch reads RMVL. Lys-77 provides a ligand contact to pyridoxal 5'-phosphate. FMN-binding positions include 87–88, 93–94, and Gln-116; these read YT and RK. Tyr-134, Arg-138, and Ser-142 together coordinate pyridoxal 5'-phosphate. FMN is bound by residues 151 to 152 and Trp-199; that span reads QS. Residue 205-207 coordinates pyridoxal 5'-phosphate; the sequence is RLH. FMN is bound at residue Arg-209.

It belongs to the pyridoxamine 5'-phosphate oxidase family. In terms of assembly, homodimer. FMN serves as cofactor.

The enzyme catalyses pyridoxamine 5'-phosphate + O2 + H2O = pyridoxal 5'-phosphate + H2O2 + NH4(+). It carries out the reaction pyridoxine 5'-phosphate + O2 = pyridoxal 5'-phosphate + H2O2. It functions in the pathway cofactor metabolism; pyridoxal 5'-phosphate salvage; pyridoxal 5'-phosphate from pyridoxamine 5'-phosphate: step 1/1. The protein operates within cofactor metabolism; pyridoxal 5'-phosphate salvage; pyridoxal 5'-phosphate from pyridoxine 5'-phosphate: step 1/1. Catalyzes the oxidation of either pyridoxine 5'-phosphate (PNP) or pyridoxamine 5'-phosphate (PMP) into pyridoxal 5'-phosphate (PLP). The chain is Putative pyridoxamine 5'-phosphate oxidase from Caenorhabditis elegans.